The chain runs to 185 residues: Ribosome-recycling factor (185 aa).

Belongs to the RRF family.

It is found in the cytoplasm. Functionally, responsible for the release of ribosomes from messenger RNA at the termination of protein biosynthesis. May increase the efficiency of translation by recycling ribosomes from one round of translation to another. The polypeptide is Ribosome-recycling factor (Salinispora arenicola (strain CNS-205)).